The chain runs to 434 residues: Trigger factor (434 aa).

The PPIase FKBP-type domain maps to 160-245 (GDKAKINFVG…LNEVQAANLP (86 aa)).

It belongs to the FKBP-type PPIase family. Tig subfamily.

It is found in the cytoplasm. The enzyme catalyses [protein]-peptidylproline (omega=180) = [protein]-peptidylproline (omega=0). Functionally, involved in protein export. Acts as a chaperone by maintaining the newly synthesized protein in an open conformation. Functions as a peptidyl-prolyl cis-trans isomerase. The sequence is that of Trigger factor from Shewanella woodyi (strain ATCC 51908 / MS32).